The chain runs to 1603 residues: DNA polymerase theta (1603 aa).

A Helicase ATP-binding domain is found at 38-208 (EARQFEDQHL…WLDGAKVFEA (171 aa)). 51–58 (APTSAGKS) lines the ATP pocket. The DEAH box signature appears at 149-152 (DEMH). In terms of domain architecture, Helicase C-terminal spans 283 to 434 (TDSSLLEILK…GVLTRKRDAE (152 aa)).

This sequence belongs to the DNA polymerase type-A family.

It is found in the nucleus. The catalysed reaction is DNA(n) + a 2'-deoxyribonucleoside 5'-triphosphate = DNA(n+1) + diphosphate. DNA polymerase that promotes microhomology-mediated end-joining (MMEJ), an alternative non-homologous end-joining (NHEJ) machinery triggered in response to double-strand breaks in DNA. MMEJ is an error-prone repair pathway that produces deletions of sequences from the strand being repaired and promotes genomic rearrangements, such as telomere fusions. Required to prevent extensive loss of sequences near G-quadruplex (G4) DNA sites, which are prone to cause genome alterations, by generating deletions. This is DNA polymerase theta from Caenorhabditis elegans.